The primary structure comprises 335 residues: DNA-directed RNA polymerase subunit alpha (335 aa).

The alpha N-terminal domain (alpha-NTD) stretch occupies residues 1 to 233 (MTRTANEFLT…QQIAIFVDLQ (233 aa)). Positions 247–335 (VDPILLRPVD…MDDRFAYRSR (89 aa)) are alpha C-terminal domain (alpha-CTD).

Belongs to the RNA polymerase alpha chain family. As to quaternary structure, homodimer. The RNAP catalytic core consists of 2 alpha, 1 beta, 1 beta' and 1 omega subunit. When a sigma factor is associated with the core the holoenzyme is formed, which can initiate transcription.

The enzyme catalyses RNA(n) + a ribonucleoside 5'-triphosphate = RNA(n+1) + diphosphate. Functionally, DNA-dependent RNA polymerase catalyzes the transcription of DNA into RNA using the four ribonucleoside triphosphates as substrates. In Acinetobacter baylyi (strain ATCC 33305 / BD413 / ADP1), this protein is DNA-directed RNA polymerase subunit alpha.